The following is a 184-amino-acid chain: Putative rRNA methyltransferase YlbH (184 aa).

The tract at residues 1–22 (MRVISGSKKGRSLKAVAGTSTR) is disordered.

It belongs to the methyltransferase superfamily. RsmD family.

In terms of biological role, may catalyze the S-adenosyl-L-methionine-dependent methylation of a specific base in rRNA. The chain is Putative rRNA methyltransferase YlbH (ylbH) from Bacillus subtilis (strain 168).